Consider the following 1161-residue polypeptide: PAN2-PAN3 deadenylation complex catalytic subunit pan2 (1161 aa).

WD repeat units lie at residues 20 to 59 and 276 to 315; these read GLPT…RYTS and ANVS…HFNE. The segment at 316–452 is linker; it reads MSKEVEFADV…GAKLNGEAED (137 aa). Positions 453 to 822 constitute a USP domain; the sequence is DPLLKYSNVE…SPCILAYQAK (370 aa). The Exonuclease domain occupies 871 to 1049; sequence VALDTEFVDL…IEDARMALRL (179 aa). Residues Asp-874, Glu-876, Asp-983, and Asp-1042 each coordinate a divalent metal cation. Residues 1009-1060 form a WD 4 repeat; it reads NRRLSLRYLAWAVFKEYIQEEPADNNQGHDSIEDARMALRLWKKFQEYEDAG. Residues 1092-1161 are disordered; it reads RPGTAVTMQN…GDFFGGSPLK (70 aa). Polar residues predominate over residues 1097–1110; it reads VTMQNSSGRNTPST. Positions 1116-1129 are enriched in low complexity; sequence AATATATTSAPATP. Residues 1145–1155 show a composition bias toward gly residues; that stretch reads TFGGPGAGDFF.

This sequence belongs to the peptidase C19 family. PAN2 subfamily. Forms a heterotrimer with an asymmetric homodimer of the regulatory subunit pan3 to form the poly(A)-nuclease (PAN) deadenylation complex. It depends on a divalent metal cation as a cofactor.

It is found in the cytoplasm. It carries out the reaction Exonucleolytic cleavage of poly(A) to 5'-AMP.. Positively regulated by the regulatory subunit pan3. Functionally, catalytic subunit of the poly(A)-nuclease (PAN) deadenylation complex, one of two cytoplasmic mRNA deadenylases involved in mRNA turnover. PAN specifically shortens poly(A) tails of RNA and the activity is stimulated by poly(A)-binding protein pab1. PAN deadenylation is followed by rapid degradation of the shortened mRNA tails by the CCR4-NOT complex. Deadenylated mRNAs are then degraded by two alternative mechanisms, namely exosome-mediated 3'-5' exonucleolytic degradation, or deadenylation-dependent mRNA decaping and subsequent 5'-3' exonucleolytic degradation by xrn1. May also be involved in post-transcriptional maturation of mRNA poly(A) tails. The polypeptide is PAN2-PAN3 deadenylation complex catalytic subunit pan2 (Neosartorya fischeri (strain ATCC 1020 / DSM 3700 / CBS 544.65 / FGSC A1164 / JCM 1740 / NRRL 181 / WB 181) (Aspergillus fischerianus)).